The primary structure comprises 572 residues: Proline--tRNA ligase (572 aa).

The protein belongs to the class-II aminoacyl-tRNA synthetase family. ProS type 1 subfamily. As to quaternary structure, homodimer.

The protein localises to the cytoplasm. It carries out the reaction tRNA(Pro) + L-proline + ATP = L-prolyl-tRNA(Pro) + AMP + diphosphate. Catalyzes the attachment of proline to tRNA(Pro) in a two-step reaction: proline is first activated by ATP to form Pro-AMP and then transferred to the acceptor end of tRNA(Pro). As ProRS can inadvertently accommodate and process non-cognate amino acids such as alanine and cysteine, to avoid such errors it has two additional distinct editing activities against alanine. One activity is designated as 'pretransfer' editing and involves the tRNA(Pro)-independent hydrolysis of activated Ala-AMP. The other activity is designated 'posttransfer' editing and involves deacylation of mischarged Ala-tRNA(Pro). The misacylated Cys-tRNA(Pro) is not edited by ProRS. The polypeptide is Proline--tRNA ligase (Yersinia pseudotuberculosis serotype O:1b (strain IP 31758)).